The following is a 413-amino-acid chain: uncharacterized protein (413 aa).

This is an uncharacterized protein from Mycobacterium tuberculosis (strain CDC 1551 / Oshkosh).